A 250-amino-acid polypeptide reads, in one-letter code: 5'-nucleotidase SurE (250 aa).

A divalent metal cation-binding residues include aspartate 8, aspartate 9, serine 39, and asparagine 95.

The protein belongs to the SurE nucleotidase family. A divalent metal cation serves as cofactor.

It localises to the cytoplasm. The enzyme catalyses a ribonucleoside 5'-phosphate + H2O = a ribonucleoside + phosphate. In terms of biological role, nucleotidase that shows phosphatase activity on nucleoside 5'-monophosphates. The chain is 5'-nucleotidase SurE from Cupriavidus necator (strain ATCC 17699 / DSM 428 / KCTC 22496 / NCIMB 10442 / H16 / Stanier 337) (Ralstonia eutropha).